A 533-amino-acid chain; its full sequence is Amidophosphoribosyltransferase (533 aa).

Residue Cys-2 is the Nucleophile of the active site. In terms of domain architecture, Glutamine amidotransferase type-2 spans 2–238 (CGILALMLAD…PGECVFIRRS (237 aa)). Mg(2+) contacts are provided by Asp-383 and Asp-384. Ser-506 is modified (phosphoserine).

The protein in the C-terminal section; belongs to the purine/pyrimidine phosphoribosyltransferase family. Mg(2+) is required as a cofactor.

The enzyme catalyses 5-phospho-beta-D-ribosylamine + L-glutamate + diphosphate = 5-phospho-alpha-D-ribose 1-diphosphate + L-glutamine + H2O. It participates in purine metabolism; IMP biosynthesis via de novo pathway; N(1)-(5-phospho-D-ribosyl)glycinamide from 5-phospho-alpha-D-ribose 1-diphosphate: step 1/2. The chain is Amidophosphoribosyltransferase (ade4) from Schizosaccharomyces pombe (strain 972 / ATCC 24843) (Fission yeast).